The chain runs to 646 residues: Macrolide export ATP-binding/permease protein MacB (646 aa).

One can recognise an ABC transporter domain in the interval 5-243 (IELKGVSRTY…TLPKTNRIRQ (239 aa)). 41–48 (GASGSGKS) serves as a coordination point for ATP. 4 helical membrane passes run 272-292 (TLTM…VALG), 518-538 (FSIL…IGVM), 570-590 (IIEA…LSYI), and 611-631 (AAVA…YLPA).

Belongs to the ABC transporter superfamily. Macrolide exporter (TC 3.A.1.122) family. As to quaternary structure, homodimer. Part of the tripartite efflux system MacAB-TolC, which is composed of an inner membrane transporter, MacB, a periplasmic membrane fusion protein, MacA, and an outer membrane component, TolC. The complex forms a large protein conduit and can translocate molecules across both the inner and outer membranes. Interacts with MacA.

The protein resides in the cell inner membrane. Its function is as follows. Part of the tripartite efflux system MacAB-TolC. MacB is a non-canonical ABC transporter that contains transmembrane domains (TMD), which form a pore in the inner membrane, and an ATP-binding domain (NBD), which is responsible for energy generation. Confers resistance against macrolides. This chain is Macrolide export ATP-binding/permease protein MacB, found in Escherichia coli.